The sequence spans 532 residues: GH3 domain-containing protein (532 aa).

An N-terminal signal peptide occupies residues 1–18; it reads MLLLWLLLLLLLLVPLLA. A disordered region spans residues 100–123; the sequence is LTQTSHTQEQESEETLPSPASPQY. Asn-356 and Asn-451 each carry an N-linked (GlcNAc...) asparagine glycan.

The protein belongs to the GH3 family. As to expression, highly expressed in mammary tissues from mature virgins and at day 13 of pregnancy, and at lower level during lactation. Expressed at intermediate level in liver. Expressed at lower level in kidney, heart and brain.

The protein resides in the endoplasmic reticulum. It is found in the nucleus envelope. The sequence is that of GH3 domain-containing protein (Ghdc) from Mus musculus (Mouse).